We begin with the raw amino-acid sequence, 395 residues long: Choline/ethanolamine kinase (395 aa).

Alanine 2 is subject to N-acetylalanine. ATP contacts are provided by residues 75–81 (SGGLSNL), arginine 104, 146–152 (QYIPSRP), glutamine 244, and aspartate 264. 77–79 (GLS) contacts phosphocholine.

It belongs to the choline/ethanolamine kinase family. As to quaternary structure, homodimer, and heterodimer with CHKA.

It catalyses the reaction choline + ATP = phosphocholine + ADP + H(+). The catalysed reaction is ethanolamine + ATP = phosphoethanolamine + ADP + H(+). The protein operates within phospholipid metabolism; phosphatidylethanolamine biosynthesis; phosphatidylethanolamine from ethanolamine: step 1/3. Functionally, has a key role in phospholipid metabolism, and catalyzes the first step of phosphatidylethanolamine and phosphatidylcholine biosynthesis. The chain is Choline/ethanolamine kinase (CHKB) from Homo sapiens (Human).